The sequence spans 1070 residues: DNA-directed RNA polymerase subunit beta (1070 aa).

This sequence belongs to the RNA polymerase beta chain family. In terms of assembly, in plastids the minimal PEP RNA polymerase catalytic core is composed of four subunits: alpha, beta, beta', and beta''. When a (nuclear-encoded) sigma factor is associated with the core the holoenzyme is formed, which can initiate transcription.

The protein localises to the plastid. It is found in the chloroplast. The catalysed reaction is RNA(n) + a ribonucleoside 5'-triphosphate = RNA(n+1) + diphosphate. Its function is as follows. DNA-dependent RNA polymerase catalyzes the transcription of DNA into RNA using the four ribonucleoside triphosphates as substrates. This Spinacia oleracea (Spinach) protein is DNA-directed RNA polymerase subunit beta.